Reading from the N-terminus, the 227-residue chain is Uracil-DNA glycosylase (227 aa).

Asp64 functions as the Proton acceptor in the catalytic mechanism.

Belongs to the uracil-DNA glycosylase (UDG) superfamily. UNG family.

The protein resides in the cytoplasm. It catalyses the reaction Hydrolyzes single-stranded DNA or mismatched double-stranded DNA and polynucleotides, releasing free uracil.. Functionally, excises uracil residues from the DNA which can arise as a result of misincorporation of dUMP residues by DNA polymerase or due to deamination of cytosine. The sequence is that of Uracil-DNA glycosylase from Alkaliphilus metalliredigens (strain QYMF).